The following is a 397-amino-acid chain: Argininosuccinate synthase (397 aa).

An ATP-binding site is contributed by 8 to 16 (AYSGGLDTS). L-citrulline contacts are provided by Y86 and S91. ATP is bound at residue G116. T118, N122, and D123 together coordinate L-aspartate. N122 lines the L-citrulline pocket. The L-citrulline site is built by R126, S175, S184, E260, and Y272.

Belongs to the argininosuccinate synthase family. Type 1 subfamily. In terms of assembly, homotetramer.

It is found in the cytoplasm. The enzyme catalyses L-citrulline + L-aspartate + ATP = 2-(N(omega)-L-arginino)succinate + AMP + diphosphate + H(+). Its pathway is amino-acid biosynthesis; L-arginine biosynthesis; L-arginine from L-ornithine and carbamoyl phosphate: step 2/3. The chain is Argininosuccinate synthase from Clostridium botulinum (strain Langeland / NCTC 10281 / Type F).